We begin with the raw amino-acid sequence, 635 residues long: PTS system fructose-specific EIIABC component (635 aa).

The PTS EIIA type-2 domain maps to 5-149 (ELLTKHTIKL…DAIIDIINQH (145 aa)). The active-site Tele-phosphohistidine intermediate; for EIIA activity is the His-67. His-67 is subject to Phosphohistidine; by HPr. Residues 149 to 168 (HDKDDDEEEEEEEAAPAPAG) form a disordered region. The span at 152–162 (DDDEEEEEEEA) shows a compositional bias: acidic residues. The PTS EIIB type-2 domain maps to 172-267 (ILAVTACPTG…PQELIEKAMN (96 aa)). The Phosphocysteine intermediate; for EIIB activity role is filled by Cys-178. Cys-178 carries the post-translational modification Phosphocysteine; by EIIA. Residues 273-293 (YQGSGGGSAASNDDEEAKGKS) form a disordered region. A PTS EIIC type-2 domain is found at 301-635 (FYKHLMSGVS…GIVKKPVTEK (335 aa)). 9 helical membrane passes run 312-332 (MLPF…WGIH), 350-370 (FIGG…FIAM), 392-412 (NAGF…VILL), 428-448 (PVLI…QFVV), 470-490 (NLVL…GGPL), 511-531 (AAIM…TTIF), 544-564 (ITCY…FAAA), 569-589 (VIPA…FFRV), and 608-628 (MLYL…LGIV).

It localises to the cell membrane. It carries out the reaction D-fructose(out) + N(pros)-phospho-L-histidyl-[protein] = D-fructose 1-phosphate(in) + L-histidyl-[protein]. Functionally, the phosphoenolpyruvate-dependent sugar phosphotransferase system (sugar PTS), a major carbohydrate active transport system, catalyzes the phosphorylation of incoming sugar substrates concomitantly with their translocation across the cell membrane. This system is involved in fructose transport. The protein is PTS system fructose-specific EIIABC component (fruA) of Bacillus subtilis (strain 168).